Reading from the N-terminus, the 483-residue chain is Aspartyl/glutamyl-tRNA(Asn/Gln) amidotransferase subunit B (483 aa).

The protein belongs to the GatB/GatE family. GatB subfamily. As to quaternary structure, heterotrimer of A, B and C subunits.

It catalyses the reaction L-glutamyl-tRNA(Gln) + L-glutamine + ATP + H2O = L-glutaminyl-tRNA(Gln) + L-glutamate + ADP + phosphate + H(+). The enzyme catalyses L-aspartyl-tRNA(Asn) + L-glutamine + ATP + H2O = L-asparaginyl-tRNA(Asn) + L-glutamate + ADP + phosphate + 2 H(+). Functionally, allows the formation of correctly charged Asn-tRNA(Asn) or Gln-tRNA(Gln) through the transamidation of misacylated Asp-tRNA(Asn) or Glu-tRNA(Gln) in organisms which lack either or both of asparaginyl-tRNA or glutaminyl-tRNA synthetases. The reaction takes place in the presence of glutamine and ATP through an activated phospho-Asp-tRNA(Asn) or phospho-Glu-tRNA(Gln). The protein is Aspartyl/glutamyl-tRNA(Asn/Gln) amidotransferase subunit B of Rickettsia rickettsii (strain Sheila Smith).